We begin with the raw amino-acid sequence, 645 residues long: Translation factor GUF1, mitochondrial (645 aa).

In terms of domain architecture, tr-type G spans 44–228; the sequence is ENYRNFSIVA…AIIDRIPPPT (185 aa). Residues 53–60, 120–124, and 174–177 each bind GTP; these read AHVDHGKS, DTPGH, and NKID.

This sequence belongs to the TRAFAC class translation factor GTPase superfamily. Classic translation factor GTPase family. LepA subfamily.

It is found in the mitochondrion inner membrane. The catalysed reaction is GTP + H2O = GDP + phosphate + H(+). In terms of biological role, promotes mitochondrial protein synthesis. May act as a fidelity factor of the translation reaction, by catalyzing a one-codon backward translocation of tRNAs on improperly translocated ribosomes. Binds to mitochondrial ribosomes in a GTP-dependent manner. The protein is Translation factor GUF1, mitochondrial of Saccharomyces cerevisiae (strain ATCC 204508 / S288c) (Baker's yeast).